A 145-amino-acid chain; its full sequence is Hemoglobin subunit beta-3 (145 aa).

Positions 1-145 (MLTAEEKAAV…VANALAHRYH (145 aa)) constitute a Globin domain. Residue Thr11 is modified to Phosphothreonine. Residue Lys58 is modified to N6-acetyllysine. His62 lines the heme b pocket. Lys81 bears the N6-acetyllysine mark. Residue His91 coordinates heme b. Cys92 is subject to S-nitrosocysteine.

This sequence belongs to the globin family. Heterotetramer of two alpha chains and two beta chains. As to expression, red blood cells.

Functionally, involved in oxygen transport from the lung to the various peripheral tissues. This is Hemoglobin subunit beta-3 (HBB) from Odocoileus virginianus virginianus (Virginia white-tailed deer).